The primary structure comprises 309 residues: Peptidyl-prolyl cis-trans isomerase 9 (309 aa).

A PPIase cyclophilin-type domain is found at Phe8–Glu173. Basic and acidic residues-rich tracts occupy residues Asn217–Arg229, Arg239–Asn265, Glu280–Arg289, and Trp296–Val309. The disordered stretch occupies residues Asn217–Val309.

Belongs to the cyclophilin-type PPIase family. In terms of tissue distribution, co-expressed with pdi-1 in the syncytial hypodermis.

The enzyme catalyses [protein]-peptidylproline (omega=180) = [protein]-peptidylproline (omega=0). In terms of biological role, PPIases accelerate the folding of proteins. It catalyzes the cis-trans isomerization of proline imidic peptide bonds in oligopeptides. Thought to function as a catalyst in the folding and modification of cuticle collagens. The sequence is that of Peptidyl-prolyl cis-trans isomerase 9 (cyn-9) from Caenorhabditis elegans.